We begin with the raw amino-acid sequence, 178 residues long: Long polar fimbria protein A (178 aa).

Positions 1 to 24 (MEFLMKKVVFALSALAVVSTSAFA) are cleaved as a signal peptide.

Belongs to the fimbrial protein family.

The protein localises to the fimbrium. The chain is Long polar fimbria protein A (lpfA) from Salmonella typhimurium (strain LT2 / SGSC1412 / ATCC 700720).